The chain runs to 71 residues: Conotoxin TxMMSK-05 (71 aa).

An N-terminal signal peptide occupies residues Met1–Ala20. A propeptide spanning residues Val21 to Arg52 is cleaved from the precursor. 3 disulfide bridges follow: Cys54–Cys70, Cys55–Cys66, and Cys60–Cys69.

Belongs to the conotoxin M superfamily. Expressed by the venom duct.

The protein resides in the secreted. In Conus textile (Cloth-of-gold cone), this protein is Conotoxin TxMMSK-05.